Reading from the N-terminus, the 29-residue chain is Vodo peptide N (29 aa).

Positions G1–N29 form a cross-link, cyclopeptide (Gly-Asn). Disulfide bonds link C5–C19, C9–C21, and C14–C26.

In terms of processing, this is a cyclic peptide.

In terms of biological role, probably participates in a plant defense mechanism. This chain is Vodo peptide N, found in Viola odorata (Sweet violet).